Here is a 548-residue protein sequence, read N- to C-terminus: Chaperonin GroEL 2 (548 aa).

Residues 30-33 (TLGP), K51, 87-91 (DGTTT), G415, and D496 contribute to the ATP site. The segment at 529 to 548 (KDAMPSPDMGGMGGMGGMGF) is disordered. The segment covering 538-548 (GGMGGMGGMGF) has biased composition (gly residues).

This sequence belongs to the chaperonin (HSP60) family. In terms of assembly, forms a cylinder of 14 subunits composed of two heptameric rings stacked back-to-back. Interacts with the co-chaperonin GroES.

It localises to the cytoplasm. It catalyses the reaction ATP + H2O + a folded polypeptide = ADP + phosphate + an unfolded polypeptide.. Together with its co-chaperonin GroES, plays an essential role in assisting protein folding. The GroEL-GroES system forms a nano-cage that allows encapsulation of the non-native substrate proteins and provides a physical environment optimized to promote and accelerate protein folding. In Rhodospirillum rubrum (strain ATCC 11170 / ATH 1.1.1 / DSM 467 / LMG 4362 / NCIMB 8255 / S1), this protein is Chaperonin GroEL 2.